Here is a 206-residue protein sequence, read N- to C-terminus: Twist-related protein 1 (206 aa).

Over residues 1-18 (MMQDVSSSPVSPADDSLS) the composition is skewed to low complexity. Positions 1-109 (MMQDVSSSPV…GGGSPQSYEE (109 aa)) are disordered. Over residues 34-43 (RGARKRRSSR) the composition is skewed to basic residues. 2 stretches are compositionally biased toward gly residues: residues 48 to 65 (GSAG…GGDE) and 78 to 103 (SAGG…GGGS). Positions 112–163 (TQRVMANVRERQRTQSLNEAFAALRKIIPTLPSDKLSKIQTLKLAARYIDFL) constitute a bHLH domain. The segment at 165 to 195 (QVLQSDELDSKMASCSYVAHERLSYAFSVWR) is sufficient for transactivation activity.

In terms of assembly, efficient DNA binding requires dimerization with another bHLH protein. Homodimer or heterodimer with E proteins such as TCF3. ID1 binds preferentially to TCF3 but does not interact efficiently with TWIST1 so ID1 levels control the amount of TCF3 available to dimerize with TWIST1 and thus determine the type of dimer formed. As to expression, subset of mesodermal cells.

The protein resides in the nucleus. In terms of biological role, acts as a transcriptional regulator. Inhibits myogenesis by sequestrating E proteins, inhibiting trans-activation by MEF2, and inhibiting DNA-binding by MYOD1 through physical interaction. This interaction probably involves the basic domains of both proteins. Also represses expression of pro-inflammatory cytokines such as TNFA and IL1B. Regulates cranial suture patterning and fusion. Activates transcription as a heterodimer with E proteins. Regulates gene expression differentially, depending on dimer composition. Homodimers induce expression of FGFR2 and POSTN while heterodimers repress FGFR2 and POSTN expression and induce THBS1 expression. Heterodimerization is also required for osteoblast differentiation. Represses the activity of the circadian transcriptional activator: NPAS2-BMAL1 heterodimer. In Mus musculus (Mouse), this protein is Twist-related protein 1 (Twist1).